Consider the following 483-residue polypeptide: tRNA sulfurtransferase (483 aa).

The region spanning 62–166 (PEICDALTRI…QDKLILVKAR (105 aa)) is the THUMP domain. ATP is bound by residues 184–185 (LI), Lys-266, Gly-288, and Gln-297. An intrachain disulfide couples Cys-345 to Cys-457. The Rhodanese domain occupies 405-483 (LADTDVLLDI…GYTNVKVYRP (79 aa)). Cys-457 functions as the Cysteine persulfide intermediate in the catalytic mechanism.

Belongs to the ThiI family.

It localises to the cytoplasm. The enzyme catalyses [ThiI sulfur-carrier protein]-S-sulfanyl-L-cysteine + a uridine in tRNA + 2 reduced [2Fe-2S]-[ferredoxin] + ATP + H(+) = [ThiI sulfur-carrier protein]-L-cysteine + a 4-thiouridine in tRNA + 2 oxidized [2Fe-2S]-[ferredoxin] + AMP + diphosphate. The catalysed reaction is [ThiS sulfur-carrier protein]-C-terminal Gly-Gly-AMP + S-sulfanyl-L-cysteinyl-[cysteine desulfurase] + AH2 = [ThiS sulfur-carrier protein]-C-terminal-Gly-aminoethanethioate + L-cysteinyl-[cysteine desulfurase] + A + AMP + 2 H(+). It participates in cofactor biosynthesis; thiamine diphosphate biosynthesis. Functionally, catalyzes the ATP-dependent transfer of a sulfur to tRNA to produce 4-thiouridine in position 8 of tRNAs, which functions as a near-UV photosensor. Also catalyzes the transfer of sulfur to the sulfur carrier protein ThiS, forming ThiS-thiocarboxylate. This is a step in the synthesis of thiazole, in the thiamine biosynthesis pathway. The sulfur is donated as persulfide by IscS. The chain is tRNA sulfurtransferase from Yersinia pseudotuberculosis serotype IB (strain PB1/+).